A 356-amino-acid polypeptide reads, in one-letter code: RuBisCO accumulation factor 1 (356 aa).

An N-terminal alpha-helix region spans residues 7–185; it reads ALTTEVLQRL…RQALEKLLTD (179 aa). Residues 209 to 342 are C-terminal beta-sheet; that stretch reads PYLVPVAGTA…LLLVLRPPQV (134 aa).

This sequence belongs to the RAF family. In terms of assembly, homodimer. Forms an RbcL(8)-Raf1(8) complex. Forms complexes of many stoichiometries with RbcL with and without RbcS. RbcX and Raf1 can bind simultaneously to RbcL.

The protein resides in the cytoplasm. A major RuBisCO chaperone. Acts after GroEL-GroES chaperonin to fold and/or assemble the large subunit of RuBisCO (ccbL, rbcL). Cooperates with RbcX in RbcL folding, plays the major role in assembly of dimers into RbcL(8)-Raf1(8) intermediate complexes. RbcS replaces Raf1, leading to holoenzyme formation. In terms of biological role, required for optimal reconstitution of RuBisCO upon expression of rbcL-rbcS subunits in E.coli. Only interacts with the large subunit (cbbL, rbcL). Probably acts in the final stages of RuBisCO assembly, possibly participating in the addition of the small subunit (ccbS, rbcS). The sequence is that of RuBisCO accumulation factor 1 from Thermosynechococcus vestitus (strain NIES-2133 / IAM M-273 / BP-1).